Reading from the N-terminus, the 650-residue chain is Chaperone protein DnaK (650 aa).

T200 is modified (phosphothreonine; by autocatalysis). The interval 613–634 (QAGAAGAAGAAEGAAHAGGAQQ) is disordered.

Belongs to the heat shock protein 70 family.

Its function is as follows. Acts as a chaperone. This is Chaperone protein DnaK from Burkholderia vietnamiensis (strain G4 / LMG 22486) (Burkholderia cepacia (strain R1808)).